The following is a 418-amino-acid chain: Serine hydroxymethyltransferase (418 aa).

(6S)-5,6,7,8-tetrahydrofolate is bound by residues L121 and 125 to 127; that span reads GHL. K230 carries the N6-(pyridoxal phosphate)lysine modification. 355–357 provides a ligand contact to (6S)-5,6,7,8-tetrahydrofolate; it reads SPF.

Belongs to the SHMT family. Homodimer. Pyridoxal 5'-phosphate serves as cofactor.

It is found in the cytoplasm. The enzyme catalyses (6R)-5,10-methylene-5,6,7,8-tetrahydrofolate + glycine + H2O = (6S)-5,6,7,8-tetrahydrofolate + L-serine. It participates in one-carbon metabolism; tetrahydrofolate interconversion. The protein operates within amino-acid biosynthesis; glycine biosynthesis; glycine from L-serine: step 1/1. Catalyzes the reversible interconversion of serine and glycine with tetrahydrofolate (THF) serving as the one-carbon carrier. This reaction serves as the major source of one-carbon groups required for the biosynthesis of purines, thymidylate, methionine, and other important biomolecules. Also exhibits THF-independent aldolase activity toward beta-hydroxyamino acids, producing glycine and aldehydes, via a retro-aldol mechanism. This Streptococcus agalactiae serotype V (strain ATCC BAA-611 / 2603 V/R) protein is Serine hydroxymethyltransferase.